A 1207-amino-acid polypeptide reads, in one-letter code: DNA-directed RNA polymerase subunit beta (1207 aa).

The protein belongs to the RNA polymerase beta chain family. As to quaternary structure, the RNAP catalytic core consists of 2 alpha, 1 beta, 1 beta' and 1 omega subunit. When a sigma factor is associated with the core the holoenzyme is formed, which can initiate transcription.

The enzyme catalyses RNA(n) + a ribonucleoside 5'-triphosphate = RNA(n+1) + diphosphate. Functionally, DNA-dependent RNA polymerase catalyzes the transcription of DNA into RNA using the four ribonucleoside triphosphates as substrates. The polypeptide is DNA-directed RNA polymerase subunit beta (Enterococcus faecalis (strain ATCC 700802 / V583)).